The following is a 479-amino-acid chain: Ribosomal RNA small subunit methyltransferase F (479 aa).

S-adenosyl-L-methionine is bound by residues 128 to 134, glutamate 152, aspartate 179, and aspartate 197; that span reads ASAPGSK. Catalysis depends on cysteine 250, which acts as the Nucleophile.

It belongs to the class I-like SAM-binding methyltransferase superfamily. RsmB/NOP family.

It localises to the cytoplasm. The catalysed reaction is cytidine(1407) in 16S rRNA + S-adenosyl-L-methionine = 5-methylcytidine(1407) in 16S rRNA + S-adenosyl-L-homocysteine + H(+). In terms of biological role, specifically methylates the cytosine at position 1407 (m5C1407) of 16S rRNA. This is Ribosomal RNA small subunit methyltransferase F from Shewanella halifaxensis (strain HAW-EB4).